The following is a 445-amino-acid chain: Dihydroorotate dehydrogenase (quinone), mitochondrial (445 aa).

A mitochondrion-targeting transit peptide spans 1-16; the sequence is MNSGFPRILSKKLFTL. Residues 39 to 56 form a helical membrane-spanning segment; it reads LLKYTVGIAIGSFAGFYF. FMN-binding positions include 124-128 and Ser148; that span reads AGLDK. Lys128 serves as a coordination point for substrate. Position 173-177 (173-177) interacts with substrate; that stretch reads NRYGF. FMN-binding residues include Asn221 and Asn251. 251-256 is a substrate binding site; it reads NVSSPN. Catalysis depends on Ser254, which acts as the Nucleophile. 2 residues coordinate FMN: Lys302 and Ser330. Position 331–332 (331–332) interacts with substrate; that stretch reads NT. FMN-binding positions include Gly356, Gly386, and 407–408; that span reads YT.

This sequence belongs to the dihydroorotate dehydrogenase family. Type 2 subfamily. FMN is required as a cofactor.

Its subcellular location is the mitochondrion inner membrane. It catalyses the reaction (S)-dihydroorotate + a quinone = orotate + a quinol. The protein operates within pyrimidine metabolism; UMP biosynthesis via de novo pathway; orotate from (S)-dihydroorotate (quinone route): step 1/1. Catalyzes the conversion of dihydroorotate to orotate with quinone as electron acceptor. This is Dihydroorotate dehydrogenase (quinone), mitochondrial (URA9) from Kluyveromyces lactis (strain ATCC 8585 / CBS 2359 / DSM 70799 / NBRC 1267 / NRRL Y-1140 / WM37) (Yeast).